The sequence spans 429 residues: Glutamate-1-semialdehyde 2,1-aminomutase (429 aa).

At K265 the chain carries N6-(pyridoxal phosphate)lysine.

This sequence belongs to the class-III pyridoxal-phosphate-dependent aminotransferase family. HemL subfamily. Homodimer. The cofactor is pyridoxal 5'-phosphate.

The protein localises to the cytoplasm. It catalyses the reaction (S)-4-amino-5-oxopentanoate = 5-aminolevulinate. It functions in the pathway porphyrin-containing compound metabolism; protoporphyrin-IX biosynthesis; 5-aminolevulinate from L-glutamyl-tRNA(Glu): step 2/2. This chain is Glutamate-1-semialdehyde 2,1-aminomutase, found in Chromohalobacter salexigens (strain ATCC BAA-138 / DSM 3043 / CIP 106854 / NCIMB 13768 / 1H11).